A 486-amino-acid polypeptide reads, in one-letter code: Palmitoleoyl-protein carboxylesterase notum2 (486 aa).

Residues 1–18 (MRILEIFAILLILKEVRP) form the signal peptide. The N-linked (GlcNAc...) asparagine glycan is linked to N183. Residues S223, D331, and H380 each act as charge relay system in the active site.

The protein belongs to the pectinacetylesterase family. Notum subfamily.

It localises to the secreted. The catalysed reaction is [Wnt protein]-O-(9Z)-hexadecenoyl-L-serine + H2O = [Wnt protein]-L-serine + (9Z)-hexadecenoate + H(+). In terms of biological role, carboxylesterase that acts as a key negative regulator of the Wnt signaling pathway by specifically mediating depalmitoleoylation of WNT proteins. Serine palmitoleoylation of WNT proteins is required for efficient binding to frizzled receptors. The chain is Palmitoleoyl-protein carboxylesterase notum2 from Xenopus laevis (African clawed frog).